We begin with the raw amino-acid sequence, 297 residues long: Homoserine kinase (297 aa).

82–92 (PVSRGLGSSAA) serves as a coordination point for ATP.

It belongs to the GHMP kinase family. Homoserine kinase subfamily.

The protein localises to the cytoplasm. The catalysed reaction is L-homoserine + ATP = O-phospho-L-homoserine + ADP + H(+). It participates in amino-acid biosynthesis; L-threonine biosynthesis; L-threonine from L-aspartate: step 4/5. Its function is as follows. Catalyzes the ATP-dependent phosphorylation of L-homoserine to L-homoserine phosphate. This is Homoserine kinase from Clostridium botulinum (strain Langeland / NCTC 10281 / Type F).